A 136-amino-acid polypeptide reads, in one-letter code: Nucleoside diphosphate kinase (136 aa).

Residues Lys10, Phe58, Arg86, Thr92, Arg104, and Asn114 each contribute to the ATP site. Residue His117 is the Pros-phosphohistidine intermediate of the active site.

It belongs to the NDK family. In terms of assembly, homotetramer. The cofactor is Mg(2+).

Its subcellular location is the cytoplasm. The catalysed reaction is a 2'-deoxyribonucleoside 5'-diphosphate + ATP = a 2'-deoxyribonucleoside 5'-triphosphate + ADP. The enzyme catalyses a ribonucleoside 5'-diphosphate + ATP = a ribonucleoside 5'-triphosphate + ADP. Its function is as follows. Major role in the synthesis of nucleoside triphosphates other than ATP. The ATP gamma phosphate is transferred to the NDP beta phosphate via a ping-pong mechanism, using a phosphorylated active-site intermediate. The sequence is that of Nucleoside diphosphate kinase from Mycolicibacterium gilvum (strain PYR-GCK) (Mycobacterium gilvum (strain PYR-GCK)).